A 197-amino-acid polypeptide reads, in one-letter code: ATP-dependent Clp protease proteolytic subunit (197 aa).

Serine 98 acts as the Nucleophile in catalysis. Histidine 123 is an active-site residue.

Belongs to the peptidase S14 family. Fourteen ClpP subunits assemble into 2 heptameric rings which stack back to back to give a disk-like structure with a central cavity, resembling the structure of eukaryotic proteasomes.

The protein resides in the cytoplasm. The enzyme catalyses Hydrolysis of proteins to small peptides in the presence of ATP and magnesium. alpha-casein is the usual test substrate. In the absence of ATP, only oligopeptides shorter than five residues are hydrolyzed (such as succinyl-Leu-Tyr-|-NHMec, and Leu-Tyr-Leu-|-Tyr-Trp, in which cleavage of the -Tyr-|-Leu- and -Tyr-|-Trp bonds also occurs).. In terms of biological role, cleaves peptides in various proteins in a process that requires ATP hydrolysis. Has a chymotrypsin-like activity. Plays a major role in the degradation of misfolded proteins. The protein is ATP-dependent Clp protease proteolytic subunit of Anaplasma phagocytophilum (strain HZ).